Consider the following 473-residue polypeptide: Photosystem II CP43 reaction center protein (473 aa).

The propeptide occupies 1 to 14 (MKTLYSLRRFYHVE). T15 bears the N-acetylthreonine mark. T15 is modified (phosphothreonine). Transmembrane regions (helical) follow at residues 69–93 (LFEV…PHLA), 134–155 (LLGP…KDRN), 178–200 (KALY…RKIT), 255–275 (KPFA…LSYS), and 291–312 (WFNN…ASQA). E367 is a binding site for [CaMn4O5] cluster. Residues 447-471 (RARAAAAGFEKGIDRDFEPVLSMTP) form a helical membrane-spanning segment.

It belongs to the PsbB/PsbC family. PsbC subfamily. In terms of assembly, PSII is composed of 1 copy each of membrane proteins PsbA, PsbB, PsbC, PsbD, PsbE, PsbF, PsbH, PsbI, PsbJ, PsbK, PsbL, PsbM, PsbT, PsbX, PsbY, PsbZ, Psb30/Ycf12, at least 3 peripheral proteins of the oxygen-evolving complex and a large number of cofactors. It forms dimeric complexes. The cofactor is Binds multiple chlorophylls and provides some of the ligands for the Ca-4Mn-5O cluster of the oxygen-evolving complex. It may also provide a ligand for a Cl- that is required for oxygen evolution. PSII binds additional chlorophylls, carotenoids and specific lipids..

It localises to the plastid. Its subcellular location is the chloroplast thylakoid membrane. In terms of biological role, one of the components of the core complex of photosystem II (PSII). It binds chlorophyll and helps catalyze the primary light-induced photochemical processes of PSII. PSII is a light-driven water:plastoquinone oxidoreductase, using light energy to abstract electrons from H(2)O, generating O(2) and a proton gradient subsequently used for ATP formation. The chain is Photosystem II CP43 reaction center protein from Phaseolus vulgaris (Kidney bean).